The sequence spans 530 residues: Metal transporter Nramp5 (530 aa).

Polar residues predominate over residues 1–10; that stretch reads MTGSTVSRQE. Positions 1-53 are disordered; it reads MTGSTVSRQENSPKRPNDSNGEFKRLLVPETSQPEEDELHESPPENQILNVEE. Residues 11-27 show a composition bias toward basic and acidic residues; that stretch reads NSPKRPNDSNGEFKRLL. Helical transmembrane passes span 65-85, 98-118, 147-167, 179-199, 207-227, 253-273, 299-319, 341-361, 387-407, 429-449, 458-478, and 485-505; these read FSWA…IAFL, AVAG…GLLM, ILLW…EVIG, FLPI…ISYL, LEGL…WMFN, AVGV…SALV, AALF…AKGF, YGGG…AAGQ, LSAF…AIMF, IPFA…MGVF, LAWT…LDFF, and FLVG…IIYL.

This sequence belongs to the NRAMP (TC 2.A.55) family.

It is found in the membrane. Seems to be involved in iron uptake. The protein is Metal transporter Nramp5 (NRAMP5) of Arabidopsis thaliana (Mouse-ear cress).